The primary structure comprises 326 residues: DNA-directed RNA polymerase subunit alpha (326 aa).

An alpha N-terminal domain (alpha-NTD) region spans residues 1 to 230 (MLKIEKQAKA…LHLDPFLEIG (230 aa)). The interval 249–326 (DIQVIDDKSH…YDLEKNGSPE (78 aa)) is alpha C-terminal domain (alpha-CTD).

Belongs to the RNA polymerase alpha chain family. As to quaternary structure, homodimer. The RNAP catalytic core consists of 2 alpha, 1 beta, 1 beta' and 1 omega subunit. When a sigma factor is associated with the core the holoenzyme is formed, which can initiate transcription.

It carries out the reaction RNA(n) + a ribonucleoside 5'-triphosphate = RNA(n+1) + diphosphate. In terms of biological role, DNA-dependent RNA polymerase catalyzes the transcription of DNA into RNA using the four ribonucleoside triphosphates as substrates. This Fusobacterium nucleatum subsp. nucleatum (strain ATCC 25586 / DSM 15643 / BCRC 10681 / CIP 101130 / JCM 8532 / KCTC 2640 / LMG 13131 / VPI 4355) protein is DNA-directed RNA polymerase subunit alpha.